Here is a 225-residue protein sequence, read N- to C-terminus: Thylakoid lumenal 17.9 kDa protein, chloroplastic (225 aa).

It is found in the plastid. Its subcellular location is the chloroplast thylakoid lumen. The protein is Thylakoid lumenal 17.9 kDa protein, chloroplastic of Arabidopsis thaliana (Mouse-ear cress).